The chain runs to 196 residues: ATP synthase subunit b 2 (196 aa).

A compositionally biased stretch (low complexity) spans 1 to 18 (MVVAQAGAPAHPPAAHGA). Residues 1-33 (MVVAQAGAPAHPPAAHGAEAGHGEAAGGEHGGF) are disordered. Residues 41–60 (FASQLIWLIVSFGALYFLMS) traverse the membrane as a helical segment.

The protein belongs to the ATPase B chain family. In terms of assembly, F-type ATPases have 2 components, F(1) - the catalytic core - and F(0) - the membrane proton channel. F(1) has five subunits: alpha(3), beta(3), gamma(1), delta(1), epsilon(1). F(0) has three main subunits: a(1), b(2) and c(10-14). The alpha and beta chains form an alternating ring which encloses part of the gamma chain. F(1) is attached to F(0) by a central stalk formed by the gamma and epsilon chains, while a peripheral stalk is formed by the delta and b chains.

The protein resides in the cell inner membrane. In terms of biological role, f(1)F(0) ATP synthase produces ATP from ADP in the presence of a proton or sodium gradient. F-type ATPases consist of two structural domains, F(1) containing the extramembraneous catalytic core and F(0) containing the membrane proton channel, linked together by a central stalk and a peripheral stalk. During catalysis, ATP synthesis in the catalytic domain of F(1) is coupled via a rotary mechanism of the central stalk subunits to proton translocation. Component of the F(0) channel, it forms part of the peripheral stalk, linking F(1) to F(0). The b'-subunit is a diverged and duplicated form of b found in plants and photosynthetic bacteria. The protein is ATP synthase subunit b 2 (atpF2) of Azorhizobium caulinodans (strain ATCC 43989 / DSM 5975 / JCM 20966 / LMG 6465 / NBRC 14845 / NCIMB 13405 / ORS 571).